Consider the following 134-residue polypeptide: Global transcriptional regulator Spx (134 aa).

Cysteine 10 and cysteine 13 are joined by a disulfide.

This sequence belongs to the ArsC family. Spx subfamily. In terms of assembly, interacts with the C-terminal domain of the alpha subunit of the RNAP.

The protein resides in the cytoplasm. Functionally, global transcriptional regulator that plays a key role in stress response and exerts either positive or negative regulation of genes. Acts by interacting with the C-terminal domain of the alpha subunit of the RNA polymerase (RNAP). This interaction can enhance binding of RNAP to the promoter region of target genes and stimulate their transcription, or block interaction of RNAP with activator. The sequence is that of Global transcriptional regulator Spx from Streptococcus pyogenes serotype M1.